We begin with the raw amino-acid sequence, 231 residues long: MAKLTKRQKAINEKVDFNKAYGIDEAVALLKELSTVKFPETVDAAINLGIDPRKSDQAVRGATSLPHGTGKDVRVAVFTQGAAADAAKEAGAEFVGMEDLADQIKGGMMDFDVVIADPAAMRVVGALGQILGPRGLMPNPKTGTVTPDVAGAVKNAKAGQVRFRADKGGVIHGGIGKVSFELNAIKENLEALVSDLKKAKPAAAKGVYLKKISLSTTMGPGLTIDQSSLEI.

This sequence belongs to the universal ribosomal protein uL1 family. Part of the 50S ribosomal subunit.

Its function is as follows. Binds directly to 23S rRNA. The L1 stalk is quite mobile in the ribosome, and is involved in E site tRNA release. Functionally, protein L1 is also a translational repressor protein, it controls the translation of the L11 operon by binding to its mRNA. This is Large ribosomal subunit protein uL1 from Teredinibacter turnerae (strain ATCC 39867 / T7901).